Consider the following 473-residue polypeptide: uncharacterized protein (473 aa).

The tract at residues methionine 1–aspartate 86 is disordered. Residues isoleucine 10–isoleucine 19 are compositionally biased toward basic and acidic residues. Polar residues-rich tracts occupy residues aspartate 20–asparagine 39 and glutamate 55–alanine 68. Serine 64 is modified (phosphoserine). Residues serine 69 to serine 83 are compositionally biased toward low complexity. 3 consecutive RRM domains span residues leucine 95 to phenylalanine 165, isoleucine 188 to valine 260, and valine 305 to leucine 370. Residues methionine 448 to glutamate 473 are disordered. Residues asparagine 453–lysine 467 show a composition bias toward polar residues.

This is an uncharacterized protein from Schizosaccharomyces pombe (strain 972 / ATCC 24843) (Fission yeast).